Reading from the N-terminus, the 434-residue chain is O-phosphoseryl-tRNA(Sec) selenium transferase (434 aa).

Positions 1-40 are tetramerization; the sequence is MGLNITGLIPKHMENRGKLTLKENLKIIENILEQRKAPEN. Arginine 71 serves as a coordination point for pyridoxal 5'-phosphate. The phosphate loop (P-loop) stretch occupies residues 92-102; sequence GRSGNLIDPQP. 3 residues coordinate substrate: arginine 93, serine 94, and glutamine 101. Lysine 277 is modified (N6-(pyridoxal phosphate)lysine). Residue arginine 306 coordinates substrate.

It belongs to the SepSecS family. As to quaternary structure, homotetramer. It depends on pyridoxal 5'-phosphate as a cofactor.

It carries out the reaction O-phospho-L-seryl-tRNA(Sec) + selenophosphate + H2O = L-selenocysteinyl-tRNA(Sec) + 2 phosphate. The protein operates within aminoacyl-tRNA biosynthesis; selenocysteinyl-tRNA(Sec) biosynthesis; selenocysteinyl-tRNA(Sec) from L-seryl-tRNA(Sec) (archaeal/eukaryal route): step 2/2. Converts O-phosphoseryl-tRNA(Sec) to selenocysteinyl-tRNA(Sec) required for selenoprotein biosynthesis. The polypeptide is O-phosphoseryl-tRNA(Sec) selenium transferase (spcS) (Methanocaldococcus jannaschii (strain ATCC 43067 / DSM 2661 / JAL-1 / JCM 10045 / NBRC 100440) (Methanococcus jannaschii)).